Here is a 284-residue protein sequence, read N- to C-terminus: MSNEISRNWPAPAKLNLFLHINGRRADGYHELQTLFQFIDCCDLLDFRVTQTPEQILHSDMSAVVADSDNLILRAAKSLQQATGYPGGAEIWLEKRLPMGGGLGGGSSDAATTLVALNQLWDTQLSNDELATIGLKLGADIPVFIRGFAAFAEGVGERLQAVTPTEFWYLVIAPDAHVSTAAVFQDPLLPRNTPKLGIDTLMSQPWANDCQDLVVSKYPQVAKALAWLLEYAPSRMTGTGACVFGEFSSQQQALAALAKLPSDMQGFVAKGMNISPLIVRLNRP.

Lys-14 is a catalytic residue. 98–108 (PMGGGLGGGSS) contacts ATP. The active site involves Asp-140.

This sequence belongs to the GHMP kinase family. IspE subfamily.

It catalyses the reaction 4-CDP-2-C-methyl-D-erythritol + ATP = 4-CDP-2-C-methyl-D-erythritol 2-phosphate + ADP + H(+). It functions in the pathway isoprenoid biosynthesis; isopentenyl diphosphate biosynthesis via DXP pathway; isopentenyl diphosphate from 1-deoxy-D-xylulose 5-phosphate: step 3/6. Functionally, catalyzes the phosphorylation of the position 2 hydroxy group of 4-diphosphocytidyl-2C-methyl-D-erythritol. This is 4-diphosphocytidyl-2-C-methyl-D-erythritol kinase from Shewanella sp. (strain MR-4).